The sequence spans 65 residues: Hirudin-3A' (65 aa).

The interaction with thrombin active site stretch occupies residues 1–3 (VVY). Intrachain disulfides connect cysteine 6–cysteine 14, cysteine 16–cysteine 28, and cysteine 22–cysteine 39. Residues 32–65 (SDGEKNECVTGEGTPKPQSHNDGDFEEIPEEYLQ) are disordered. Residue threonine 45 is glycosylated (O-linked (GalNAc...) threonine). The interval 55 to 65 (DFEEIPEEYLQ) is interaction with fibrinogen-binding exosite of thrombin. A compositionally biased stretch (acidic residues) spans 55–65 (DFEEIPEEYLQ). Position 63 is a sulfotyrosine (tyrosine 63).

The protein belongs to the protease inhibitor I14 (hirudin) family.

The protein localises to the secreted. In terms of biological role, hirudin is a potent thrombin-specific protease inhibitor. It forms a stable non-covalent complex with alpha-thrombin, thereby abolishing its ability to cleave fibrinogen. The polypeptide is Hirudin-3A' (Hirudo medicinalis (Medicinal leech)).